The following is a 595-amino-acid chain: Outer dynein arm-docking complex subunit 3 (595 aa).

Residues 1-69 (MTSPLCRAAS…RGAGKPSVHS (69 aa)) form a disordered region. Coiled-coil stretches lie at residues 94 to 327 (WNIK…REHL) and 385 to 473 (FAQL…ASKL).

In terms of assembly, component of the outer dynein arm-docking complex along with ODAD1, ODAD2, ODAD4 and CLXN. Interacts with ODAD1. Interacts with PIERCE1 and PIERCE2; the interactions link the outer dynein arms docking complex (ODA-DC) to the internal microtubule inner proteins (MIP) in cilium axoneme.

The protein localises to the cytoplasm. The protein resides in the cytoskeleton. It localises to the cilium basal body. Its subcellular location is the microtubule organizing center. It is found in the centrosome. The protein localises to the centriole. The protein resides in the cilium axoneme. Its function is as follows. Component of the outer dynein arm-docking complex (ODA-DC) that mediates outer dynein arms (ODA) binding onto the doublet microtubule. Involved in mediating assembly of both ODAs and their axonemal docking complex onto ciliary microtubules. The polypeptide is Outer dynein arm-docking complex subunit 3 (Homo sapiens (Human)).